Here is a 1097-residue protein sequence, read N- to C-terminus: U3 small nucleolar RNA-associated protein 22 (1097 aa).

2 stretches are compositionally biased toward basic and acidic residues: residues 1–10 and 18–27; these read MNGLKREHES and KTPETEYDSH. The tract at residues 1 to 27 is disordered; that stretch reads MNGLKREHESSSSQDGSKTPETEYDSH.

Belongs to the NRAP family. In terms of assembly, component of the ribosomal small subunit (SSU) processome.

The protein localises to the nucleus. It localises to the nucleolus. Functionally, involved in nucleolar processing of pre-18S ribosomal RNA and ribosome assembly. The polypeptide is U3 small nucleolar RNA-associated protein 22 (Schizosaccharomyces pombe (strain 972 / ATCC 24843) (Fission yeast)).